The sequence spans 145 residues: Deoxyuridine 5'-triphosphate nucleotidohydrolase (145 aa).

Substrate contacts are provided by residues 63–65, N76, 80–82, and K90; these read RSG and TID.

The protein belongs to the dUTPase family. Requires Mg(2+) as cofactor.

The enzyme catalyses dUTP + H2O = dUMP + diphosphate + H(+). The protein operates within pyrimidine metabolism; dUMP biosynthesis; dUMP from dCTP (dUTP route): step 2/2. Its function is as follows. This enzyme is involved in nucleotide metabolism: it produces dUMP, the immediate precursor of thymidine nucleotides and it decreases the intracellular concentration of dUTP so that uracil cannot be incorporated into DNA. The protein is Deoxyuridine 5'-triphosphate nucleotidohydrolase of Clostridium acetobutylicum (strain ATCC 824 / DSM 792 / JCM 1419 / IAM 19013 / LMG 5710 / NBRC 13948 / NRRL B-527 / VKM B-1787 / 2291 / W).